The primary structure comprises 133 residues: Small ribosomal subunit protein uS19 (133 aa).

It belongs to the universal ribosomal protein uS19 family.

Functionally, protein S19 forms a complex with S13 that binds strongly to the 16S ribosomal RNA. The polypeptide is Small ribosomal subunit protein uS19 (Thermococcus onnurineus (strain NA1)).